Here is a 336-residue protein sequence, read N- to C-terminus: N-((2S)-2-amino-2-carboxyethyl)-L-glutamate dehydrogenase (336 aa).

Lys78 acts as the Proton donor/acceptor in catalysis. Residues Arg122 and Lys242 each contribute to the NAD(+) site.

The protein belongs to the ornithine cyclodeaminase/mu-crystallin family. Homodimer.

It catalyses the reaction N-[(2S)-2-amino-2-carboxyethyl]-L-glutamate + NAD(+) + H2O = (S)-2,3-diaminopropanoate + 2-oxoglutarate + NADH + H(+). Its pathway is siderophore biosynthesis. Its function is as follows. Catalyzes the hydrolysis of N-((2S)-2-amino-2-carboxyethyl)-L-glutamate (ACEGA) to form L-2,3-diaminopropionic acid and 2-oxoglutarate. Involved in the biosynthesis of L-2,3-diaminopropionic acid (L-Dap), a precursor of staphyloferrin B and antibiotics. The sequence is that of N-((2S)-2-amino-2-carboxyethyl)-L-glutamate dehydrogenase from Staphylococcus aureus (strain NCTC 8325 / PS 47).